The following is a 692-amino-acid chain: Methionine--tRNA ligase (692 aa).

A 'HIGH' region motif is present at residues 12-22 (PYANGPLHLGH). Positions 143, 146, 156, and 159 each coordinate Zn(2+). Positions 330–334 (KMSKS) match the 'KMSKS' region motif. Lys-333 lines the ATP pocket. Residues 554-563 (AAAAPAAKPA) are compositionally biased toward low complexity. The segment at 554-575 (AAAAPAAKPAAPAPAPAPAKDE) is disordered. The region spanning 589–692 (DFAKLDLRIG…SGAQPGMPVR (104 aa)) is the tRNA-binding domain.

This sequence belongs to the class-I aminoacyl-tRNA synthetase family. MetG type 1 subfamily. In terms of assembly, homodimer. It depends on Zn(2+) as a cofactor.

The protein resides in the cytoplasm. It carries out the reaction tRNA(Met) + L-methionine + ATP = L-methionyl-tRNA(Met) + AMP + diphosphate. Functionally, is required not only for elongation of protein synthesis but also for the initiation of all mRNA translation through initiator tRNA(fMet) aminoacylation. The chain is Methionine--tRNA ligase from Stenotrophomonas maltophilia (strain K279a).